The chain runs to 279 residues: MMATDTSLTTSQTFAANRAVGEVAVEVRADGGVTRRGPVHEAGSLRVRFPSPEQQGLSAVLVNTAGGVAGGDRFSISLDVQAHARLTLTTAAAEKVYRTHGPAAQLDIKLKVASGGHLAWLPQETILFDQARAERRIDIELADDASLLLSEMVIFGRSAMGETMQHGRFVDRWRMRRGGKLVFAETVRLDGDIASLFGRPAVLNGGVAIGTALIVPGDAALVERLREAADTFGAEVGISAWNGFAMARFCAQNAARLRADMMTILGRAAGRALPRLWLS.

This sequence belongs to the UreD family. UreD, UreF and UreG form a complex that acts as a GTP-hydrolysis-dependent molecular chaperone, activating the urease apoprotein by helping to assemble the nickel containing metallocenter of UreC. The UreE protein probably delivers the nickel.

The protein localises to the cytoplasm. In terms of biological role, required for maturation of urease via the functional incorporation of the urease nickel metallocenter. This chain is Urease accessory protein UreD, found in Rhodopseudomonas palustris (strain ATCC BAA-98 / CGA009).